We begin with the raw amino-acid sequence, 487 residues long: Malonate-semialdehyde dehydrogenase 2 (487 aa).

Phe154, Lys178, Glu181, Arg182, and Ser231 together coordinate NAD(+). Catalysis depends on Cys286, which acts as the Nucleophile. Glu386 contributes to the NAD(+) binding site.

The protein belongs to the aldehyde dehydrogenase family. IolA subfamily. Homotetramer.

It carries out the reaction 3-oxopropanoate + NAD(+) + CoA + H2O = hydrogencarbonate + acetyl-CoA + NADH + H(+). The catalysed reaction is 2-methyl-3-oxopropanoate + NAD(+) + CoA + H2O = propanoyl-CoA + hydrogencarbonate + NADH + H(+). It participates in polyol metabolism; myo-inositol degradation into acetyl-CoA; acetyl-CoA from myo-inositol: step 7/7. Its function is as follows. Catalyzes the oxidation of malonate semialdehyde (MSA) and methylmalonate semialdehyde (MMSA) into acetyl-CoA and propanoyl-CoA, respectively. Is involved in a myo-inositol catabolic pathway. Bicarbonate, and not CO2, is the end-product of the enzymatic reaction. This Bacillus thuringiensis subsp. konkukian (strain 97-27) protein is Malonate-semialdehyde dehydrogenase 2.